We begin with the raw amino-acid sequence, 449 residues long: Packaging protein 1 (449 aa).

Residues 1–10 (MESRGKHRLK) show a composition bias toward basic residues. The disordered stretch occupies residues 1–64 (MESRGKHRLK…SSNSILHCPP (64 aa)). The span at 11–25 (KNGESKENLGEHEQA) shows a compositional bias: basic and acidic residues. Over residues 35-59 (SADSLSSPVAEPNFSSPGGRSSNSI) the composition is skewed to polar residues. 168–175 (GPTGSGKS) is a binding site for ATP. The interval 437-449 (TAYSKKCDKLANK) is DNA-binding.

It belongs to the adenoviridae packaging protein 1 family. In terms of assembly, homodimer. Part of a genome packaging complex composed of packaging proteins 1, 2 and 3; this complex specifically binds to the packaging sequence on the left end of viral genomic DNA and performs packaging of the viral genome. Interacts with protein 33K.

It is found in the virion. Its subcellular location is the host nucleus. The protein localises to the host nucleoplasm. The protein resides in the host nucleolus. Component of the packaging machinery which encapsidates the viral DNA into preformed capsids and transcriptional activator of the viral major late promoter (MLP). Binds, along with packaging proteins 2 and 3, to the specific packaging sequence on the left end of viral genomic DNA and displays ATPase activity thereby providing the power stroke of the packaging machinery. The activity of packaging protein IVa2 is stimulated by protein 33K which acts as a terminase. May be the protein that pumps DNA into the capsid powered by ATP hydrolysis. Specifically binds to the 5'-CG-3' nucleotides of the repeats making up the packaging sequence. Component of the DEF-A and DEF-B transcription factors that bind downstream elements of the major late promoter (MLP), and stimulate transcription from the MLP after initiation of viral DNA replication. DEF-A is a heterodimer packaging proteins 1 and 2 and DEF-B is a homodimer of packaging protein 1. In Mus musculus (Mouse), this protein is Packaging protein 1.